Here is a 656-residue protein sequence, read N- to C-terminus: RNA-binding protein EWS (656 aa).

The EAD (Gln/Pro/Thr-rich) stretch occupies residues 1-285; sequence MASTDYSTYS…GVYGQESGGF (285 aa). 31 repeat units span residues 8-16, 17-27, 28-34, 35-42, 43-50, 51-59, 60-68, 69-75, 76-84, 85-91, 92-110, 111-116, 117-125, 126-156, 157-163, 164-170, 171-177, 178-188, 189-193, 194-201, 202-206, 207-212, 213-218, 219-224, 225-230, 231-238, 239-245, 246-252, 253-259, 260-276, and 277-285. The 31 X approximate tandem repeats stretch occupies residues 8 to 285; the sequence is TYSQAAAQQG…GVYGQESGGF (278 aa). A compositionally biased stretch (low complexity) spans 123–137; it reads AYPAYGQQPAATAPT. A disordered region spans residues 123–360; it reads AYPAYGQQPA…PVDPDEDSDN (238 aa). Polar residues predominate over residues 143–172; it reads NKPTETSQPQSSTGGYNQPSLGYGQSNYSY. Residues 192 to 266 show a composition bias toward low complexity; the sequence is PTSYSSTQPT…QSSSYGQQSS (75 aa). Positions 256–285 constitute an IQ domain; the sequence is QQSSSYGQQSSFRQDHPSSMGVYGQESGGF. Ser-266 carries the phosphoserine; by PKC modification. Asymmetric dimethylarginine is present on residues Arg-300, Arg-302, Arg-304, Arg-309, Arg-314, Arg-317, and Arg-321. Residues 308–335 show a composition bias toward gly residues; that stretch reads DRGGMSRGGRGGGRGGMGSAGERGGFNK. The segment covering 336–350 has biased composition (low complexity); the sequence is PGGPMDEGPDLDLGP. The region spanning 361-447 is the RRM domain; it reads SAIYVQGLND…SKLKVSLARK (87 aa). Lys-439 is subject to N6-acetyllysine. Disordered regions lie at residues 448-525 and 547-656; these read KPPM…WQCP and KPEG…DRPY. Residues Arg-455 and Arg-464 each carry the asymmetric dimethylarginine modification. The residue at position 471 (Arg-471) is an Asymmetric dimethylarginine; alternate. Arg-471 carries the omega-N-methylarginine; alternate modification. Positions 472 to 490 are enriched in gly residues; it reads GGPGGPGGPGGPMGRMGGR. Residue Arg-486 is modified to Omega-N-methylarginine. Arg-490 carries the asymmetric dimethylarginine; by PRMT8 modification. Asymmetric dimethylarginine occurs at positions 494, 500, and 503. Arg-506 bears the Asymmetric dimethylarginine; alternate mark. Arg-506 is modified (omega-N-methylarginine; alternate). Residues 518-549 form a RanBP2-type zinc finger; that stretch reads RAGDWQCPNPGCGNQNFAWRTECNQCKAPKPE. Residues 551–560 show a composition bias toward pro residues; it reads FLPPPFPPPG. An asymmetric dimethylarginine mark is found at Arg-563 and Arg-565. The span at 566-591 shows a compositional bias: gly residues; it reads GGPGGMRGGRGGLMDRGGPGGMFRGG. Position 572 is an asymmetric dimethylarginine; alternate; by PRMT8 (Arg-572). At Arg-572 the chain carries Omega-N-methylarginine; alternate; by PRMT8. Asymmetric dimethylarginine occurs at positions 575, 581, 589, and 592. Residues 592 to 606 show a composition bias toward basic and acidic residues; that stretch reads RGGDRGGFRGGRGMD. Arg-596 is subject to Asymmetric dimethylarginine; alternate; by PRMT8. Residue Arg-596 is modified to Omega-N-methylarginine; alternate; by PRMT8. Arg-600 is subject to Asymmetric dimethylarginine. Arg-603 is subject to Asymmetric dimethylarginine; by PRMT8. Position 607 is an asymmetric dimethylarginine; alternate; by PRMT8 (Arg-607). Position 607 is an omega-N-methylarginine; alternate; by PRMT8 (Arg-607). Residues 607–618 show a composition bias toward gly residues; sequence RGGFGGGRRGGP. Arg-615 is modified (asymmetric dimethylarginine; alternate). Omega-N-methylarginine; alternate is present on Arg-615. Residues Arg-633 and Arg-636 each carry the asymmetric dimethylarginine modification. Residues 639 to 656 carry the Nuclear localization signal motif; sequence PGKMDKGEHRQERRDRPY. The span at 641–656 shows a compositional bias: basic and acidic residues; the sequence is KMDKGEHRQERRDRPY.

It belongs to the RRM TET family. As to quaternary structure, binds POLR2C, SF1, calmodulin and RNA. Interacts with PTK2B/FAK2 and TDRD3. Binds calmodulin in the presence, but not in the absence, of calcium ion. Forms a complex with REC8, PRDM9, SYCP3 and SYCP1; complex formation is dependent of phosphorylated form of REC8 and requires PRDM9 bound to hotspot DNA; EWSR1 joins PRDM9 with the chromosomal axis through REC8. Post-translationally, phosphorylated; calmodulin-binding inhibits phosphorylation of Ser-266. Highly methylated on arginine residues. Methylation is mediated by PRMT1 and, at lower level by PRMT8. As to expression, ubiquitous.

The protein localises to the nucleus. It is found in the cytoplasm. The protein resides in the cell membrane. Functionally, binds to ssRNA containing the consensus sequence 5'-AGGUAA-3'. Might normally function as a transcriptional repressor. EWS-fusion-proteins (EFPS) may play a role in the tumorigenic process. They may disturb gene expression by mimicking, or interfering with the normal function of CTD-POLII within the transcription initiation complex. They may also contribute to an aberrant activation of the fusion protein target genes. This is RNA-binding protein EWS (EWSR1) from Homo sapiens (Human).